Consider the following 218-residue polypeptide: Ras-related protein R-Ras (218 aa).

The tract at residues 1 to 30 (MSSGAASGTGRGRPRGGGPGPRDPPPGETH) is disordered. Residues 7–20 (SGTGRGRPRGGGPG) are compositionally biased toward gly residues. 36–44 (GGGGVGKSA) lines the GTP pocket. An Effector region motif is present at residues 58 to 66 (YDPTIEDSY). Residues 83–87 (DTAGQ), 142–145 (NKAD), and 172–174 (SAK) contribute to the GTP site. Cysteine methyl ester is present on C215. C215 is lipidated: S-geranylgeranyl cysteine. Positions 216 to 218 (VLL) are cleaved as a propeptide — removed in mature form.

The protein belongs to the small GTPase superfamily. Ras family. Interacts with PLCE1. Interacts (active GTP-bound form preferentially) with RGS14. Interacts with OSBPL3. Interacts with ZDHHC19. S-palmitoylated by ZDHHC19, leading to increased association with membranes and with rafts/caveolae as well as enhanced cell viability.

It is found in the cell membrane. It catalyses the reaction GTP + H2O = GDP + phosphate + H(+). Its function is as follows. GTP-binding protein with GTPase activity, likely involved in the regulation of MAPK signaling pathway and thereby controlling multiple cellular processes. Regulates the organization of the actin cytoskeleton. With OSPBL3, modulates integrin beta-1 (ITGB1) activity. The protein is Ras-related protein R-Ras (Rras) of Mus musculus (Mouse).